The primary structure comprises 281 residues: 4-diphosphocytidyl-2-C-methyl-D-erythritol kinase (281 aa).

Lys-15 is a catalytic residue. 98-108 (PTGAGLGGGSS) contacts ATP. The active site involves Asp-140.

It belongs to the GHMP kinase family. IspE subfamily.

The enzyme catalyses 4-CDP-2-C-methyl-D-erythritol + ATP = 4-CDP-2-C-methyl-D-erythritol 2-phosphate + ADP + H(+). It participates in isoprenoid biosynthesis; isopentenyl diphosphate biosynthesis via DXP pathway; isopentenyl diphosphate from 1-deoxy-D-xylulose 5-phosphate: step 3/6. Catalyzes the phosphorylation of the position 2 hydroxy group of 4-diphosphocytidyl-2C-methyl-D-erythritol. The protein is 4-diphosphocytidyl-2-C-methyl-D-erythritol kinase of Neisseria meningitidis serogroup C (strain 053442).